Consider the following 177-residue polypeptide: MVKKHKFYTKEDLLCSSRGELFGKYGPQLPAPNMLMIDRLVKVTENGGNYNKGFIKAELDINPNMWFFSCHFIGDPVMPGCLGLDAMWQLVGFYLGWLGGKGKGRALGVREVKFSGQILPTSKIVVYYIHFRRIINRKLFMGMADGEVFCDGKIIYTANDLKVGLFQDITSFKKDFK.

H71 is an active-site residue.

Belongs to the thioester dehydratase family. FabA subfamily. Homodimer.

The protein localises to the cytoplasm. It carries out the reaction a (3R)-hydroxyacyl-[ACP] = a (2E)-enoyl-[ACP] + H2O. The catalysed reaction is (3R)-hydroxydecanoyl-[ACP] = (2E)-decenoyl-[ACP] + H2O. It catalyses the reaction (2E)-decenoyl-[ACP] = (3Z)-decenoyl-[ACP]. It functions in the pathway lipid metabolism; fatty acid biosynthesis. Its function is as follows. Necessary for the introduction of cis unsaturation into fatty acids. Catalyzes the dehydration of (3R)-3-hydroxydecanoyl-ACP to E-(2)-decenoyl-ACP and then its isomerization to Z-(3)-decenoyl-ACP. Can catalyze the dehydratase reaction for beta-hydroxyacyl-ACPs with saturated chain lengths up to 16:0, being most active on intermediate chain length. In Wigglesworthia glossinidia brevipalpis, this protein is 3-hydroxydecanoyl-[acyl-carrier-protein] dehydratase.